The chain runs to 1323 residues: Phosphoribosylformylglycinamidine synthase (1323 aa).

ATP is bound by residues 312-323 (GAATGSGGEIRD), 391-393 (NGY), and Ala691. The Mg(2+) site is built by Asp692, Glu733, Asn737, and Asp903. An ATP-binding site is contributed by Ser905. Positions 1062-1306 (VAILREQGVN…YPHSKASEWG (245 aa)) constitute a Glutamine amidotransferase type-1 domain. Cys1156 functions as the Nucleophile in the catalytic mechanism. Catalysis depends on residues His1284 and Glu1286.

It in the N-terminal section; belongs to the FGAMS family.

It is found in the cytoplasm. The catalysed reaction is N(2)-formyl-N(1)-(5-phospho-beta-D-ribosyl)glycinamide + L-glutamine + ATP + H2O = 2-formamido-N(1)-(5-O-phospho-beta-D-ribosyl)acetamidine + L-glutamate + ADP + phosphate + H(+). The protein operates within purine metabolism; IMP biosynthesis via de novo pathway; 5-amino-1-(5-phospho-D-ribosyl)imidazole from N(2)-formyl-N(1)-(5-phospho-D-ribosyl)glycinamide: step 1/2. In terms of biological role, phosphoribosylformylglycinamidine synthase involved in the purines biosynthetic pathway. Catalyzes the ATP-dependent conversion of formylglycinamide ribonucleotide (FGAR) and glutamine to yield formylglycinamidine ribonucleotide (FGAM) and glutamate. The protein is Phosphoribosylformylglycinamidine synthase (ade3) of Schizosaccharomyces pombe (strain 972 / ATCC 24843) (Fission yeast).